Here is a 640-residue protein sequence, read N- to C-terminus: Epithelial sodium channel subunit beta (640 aa).

Topologically, residues 1–50 are cytoplasmic; it reads MHVKKYLLKGLHRLQKGPGYTYKELLVWYCDNTNTHGPKRIICEGPKKKA. Residues 51–71 form a helical membrane-spanning segment; the sequence is MWFLLTLLFAALVCWQWGIFI. The Extracellular portion of the chain corresponds to 72 to 532; sequence RTYLSWEVSV…GGQFGFWMGG (461 aa). 9 disulfide bridges follow: Cys98–Cys272, Cys184–Cys189, Cys196–Cys203, Cys249–Cys256, Cys361–Cys448, Cys386–Cys444, Cys390–Cys440, Cys399–Cys426, and Cys401–Cys415. Asn260 is a glycosylation site (N-linked (GlcNAc...) asparagine). Residues 533–553 traverse the membrane as a helical segment; the sequence is SVLCLIEFGEIIIDFVWITII. The Cytoplasmic segment spans residues 554-640; the sequence is KLVALAKSLR…IESDSEGDAI (87 aa). The disordered stretch occupies residues 590-640; that stretch reads FQPDTAPRSPNTGPYPSEQALPIPGTPPPNYDSLRLQPLDVIESDSEGDAI. The PY motif; recruits WW domain-containing proteins and is thereby required for ubiquitination and inhibition of the channel by NEDD4 and NEDD4L motif lies at 616–620; it reads PPPNY. Positions 631–640 are enriched in acidic residues; that stretch reads IESDSEGDAI. A phosphoserine mark is found at Ser633 and Ser635.

Belongs to the amiloride-sensitive sodium channel (TC 1.A.6) family. SCNN1B subfamily. In terms of assembly, component of the heterotrimeric epithelial sodium channel (ENaC) composed of an alpha/SCNN1A, a beta/SCNN1B and a gamma/SCNN1G subunit. An additional delta/SCNN1D subunit can replace the alpha/SCNN1A subunit to form an alternative channel with specific properties. Interacts with WWP1 (via WW domains). Interacts with WWP2 (via WW domains); inhibits the channel. Interacts with the full-length immature form of PCSK9 (pro-PCSK9); inhibits ENaC by promoting its proteasomal degradation. Interacts (N-glycosylated) with BPIFA1; the interaction is direct and inhibits the proteolytic processing of SCNN1A and SCNN1G and the activation of ENaC. Ubiquitinated. Can be ubiquitinated at multiple sites and undergo monoubiquitination and polyubiquitination. Ubiquitination by NEDD4 or NEDD4L inhibits the ENaC channel through endocytosis, intracellular retention and degradation of its individual subunits. However, some studies could not confirm the ubiquitination of this subunit of the ENaC. In terms of processing, phosphorylated on serine and threonine residues. Aldosterone and insulin increase the basal level of phosphorylation. Post-translationally, N-glycosylated. N-glycosylation is required for interaction with BPIFA1. As to expression, detected in placenta, lung and kidney. Expressed in kidney (at protein level).

It is found in the apical cell membrane. The protein localises to the cytoplasmic vesicle membrane. The catalysed reaction is Na(+)(in) = Na(+)(out). Its activity is regulated as follows. Originally identified and characterized by its inhibition by the diuretic drug amiloride. This is one of the three pore-forming subunits of the heterotrimeric epithelial sodium channel (ENaC), a critical regulator of sodium balance and fluid homeostasis. ENaC operates in epithelial tissues, where it mediates the electrodiffusion of sodium ions from extracellular fluid through the apical membrane of cells, with water following osmotically. It plays a key role in maintaining sodium homeostasis through electrogenic sodium reabsorption in the kidneys. Additionally, ENaC is essential for airway surface liquid homeostasis, which is crucial for proper mucus clearance. The polypeptide is Epithelial sodium channel subunit beta (Homo sapiens (Human)).